The sequence spans 158 residues: Trafficking protein particle complex subunit 6B (158 aa).

It belongs to the TRAPP small subunits family. BET3 subfamily. Homodimer. Part of a TRAPP complex. Heterodimer with TRAPPC3. The heterodimer TRAPPC6B-TRAPPC3 interacts with TRAPPC1 likely providing a core for TRAPP complex formation.

It localises to the golgi apparatus. Its subcellular location is the cis-Golgi network. The protein localises to the endoplasmic reticulum. Functionally, component of a transport protein particle (TRAPP) complex that may function in specific stages of inter-organelle traffic. Specifically involved in the early development of neural circuitry, likely by controlling the frequency and amplitude of intracellular calcium transients implicated in the regulation of neuron differentiation and survival. The chain is Trafficking protein particle complex subunit 6B from Bos taurus (Bovine).